A 172-amino-acid polypeptide reads, in one-letter code: MAPSFYHYLPVPMDEMGGKQGWGSHRQWLGAAILVVLFGVTLVILTIYFAVTANSVACRDGLRAQAECRNTTHLLQRQLTRTQDSLLQAETQANSCNLTVVTLQESLEKKVSQALEQQARIKELENEVTKLNQELENLRIQKETSSTVQVNSGSSMVVSSLLVLKVSLFLLF.

At 1–30 the chain is on the cytoplasmic side; it reads MAPSFYHYLPVPMDEMGGKQGWGSHRQWLG. A helical; Signal-anchor for type II membrane protein transmembrane segment spans residues 31-51; the sequence is AAILVVLFGVTLVILTIYFAV. Residues 52–152 are Extracellular-facing; it reads TANSVACRDG…ETSSTVQVNS (101 aa). The N-linked (GlcNAc...) asparagine glycan is linked to Asn70. Positions 74–147 form a coiled coil; it reads LLQRQLTRTQ…LRIQKETSST (74 aa). Asn94 carries an N-linked (GlcNAc...) asparagine; atypical glycan. Asn97 carries N-linked (GlcNAc...) asparagine glycosylation. Ser152 is lipidated: GPI-anchor amidated serine. Residues 153 to 172 constitute a propeptide, removed in mature form; it reads GSSMVVSSLLVLKVSLFLLF.

In terms of assembly, parallel homodimer; disulfide-linked. May form homotetramers under reducing conditions. Isoform 1 and isoform 2 form homodimers and also heterodimers with each other. Dimerization is essential for its antiviral activity. Interacts (via cytoplasmic domain) with ARHGAP44. Interacts with MMP14 (via C-terminal cytoplasmic tail). Interacts with LILRA4/ILT7. Interacts with RNF115. In terms of tissue distribution, in naive mice, specifically expressed on type I interferon-producing cells (at protein level).

The protein localises to the golgi apparatus. It localises to the trans-Golgi network. The protein resides in the cell membrane. It is found in the late endosome. Its subcellular location is the membrane raft. The protein localises to the cytoplasm. It localises to the apical cell membrane. Functionally, IFN-induced antiviral host restriction factor which efficiently blocks the release of diverse mammalian enveloped viruses by directly tethering nascent virions to the membranes of infected cells. Acts as a direct physical tether, holding virions to the cell membrane and linking virions to each other. The tethered virions can be internalized by endocytosis and subsequently degraded or they can remain on the cell surface. In either case, their spread as cell-free virions is restricted. Its target viruses belong to diverse families, including retroviridae: human immunodeficiency virus type 1 (HIV-1), mouse mammary tumor virus (MMTV) and murine leukemia virus (MLV), filoviridae: ebola virus (EBOV), arenaviridae: lassa virus (LASV), and rhabdoviridae: vesicular stomatitis virus (VSV). Can inhibit cell surface proteolytic activity of MMP14 causing decreased activation of MMP15 which results in inhibition of cell growth and migration. Can stimulate signaling by LILRA4/ILT7 and consequently provide negative feedback to the production of IFN by plasmacytoid dendritic cells in response to viral infection. Plays a role in the organization of the subapical actin cytoskeleton in polarized epithelial cells. The polypeptide is Bone marrow stromal antigen 2 (Bst2) (Mus musculus (Mouse)).